Consider the following 131-residue polypeptide: MSWQAYVDDHLMCEIEGNHLSAAAIIGHDGSVWAQSATFPQLKPEEVTGILNDFNEPGSLAPTGLYLGGTKYMVIQGEPGAVIRGKKGPGGVTVKKSTLALLIGIYDEPMTPGQCNMIVERLGDYLVEQGL.

This sequence belongs to the profilin family. In terms of assembly, occurs in many kinds of cells as a complex with monomeric actin in a 1:1 ratio.

The protein localises to the cytoplasm. Its subcellular location is the cytoskeleton. Functionally, binds to actin and affects the structure of the cytoskeleton. At high concentrations, profilin prevents the polymerization of actin, whereas it enhances it at low concentrations. By binding to PIP2, it inhibits the formation of IP3 and DG. The chain is Profilin from Prunus persica (Peach).